We begin with the raw amino-acid sequence, 252 residues long: Adenosylcobinamide-GDP ribazoletransferase (252 aa).

7 helical membrane passes run 4–24 (LFKG…PYVE), 38–58 (PIIG…INYL), 60–80 (ISIV…TGML), 113–133 (FSVI…HSFL), 141–161 (ILMF…ITII), 190–210 (LVCI…LLIV), and 232–252 (VAGF…CLFT).

Belongs to the CobS family. Mg(2+) is required as a cofactor.

The protein resides in the cell membrane. The enzyme catalyses alpha-ribazole + adenosylcob(III)inamide-GDP = adenosylcob(III)alamin + GMP + H(+). It carries out the reaction alpha-ribazole 5'-phosphate + adenosylcob(III)inamide-GDP = adenosylcob(III)alamin 5'-phosphate + GMP + H(+). Its pathway is cofactor biosynthesis; adenosylcobalamin biosynthesis; adenosylcobalamin from cob(II)yrinate a,c-diamide: step 7/7. Its function is as follows. Joins adenosylcobinamide-GDP and alpha-ribazole to generate adenosylcobalamin (Ado-cobalamin). Also synthesizes adenosylcobalamin 5'-phosphate from adenosylcobinamide-GDP and alpha-ribazole 5'-phosphate. This Clostridium botulinum (strain Eklund 17B / Type B) protein is Adenosylcobinamide-GDP ribazoletransferase.